The following is a 126-amino-acid chain: Large ribosomal subunit protein bL12 (126 aa).

The tract at residues 97–126 (PQPVKSGVSKEEAEEAKKQLAESGAEVEVK) is disordered. Basic and acidic residues predominate over residues 104–116 (VSKEEAEEAKKQL).

Belongs to the bacterial ribosomal protein bL12 family. Homodimer. Part of the ribosomal stalk of the 50S ribosomal subunit. Forms a multimeric L10(L12)X complex, where L10 forms an elongated spine to which 2 to 4 L12 dimers bind in a sequential fashion. Binds GTP-bound translation factors.

Functionally, forms part of the ribosomal stalk which helps the ribosome interact with GTP-bound translation factors. Is thus essential for accurate translation. This is Large ribosomal subunit protein bL12 from Geotalea uraniireducens (strain Rf4) (Geobacter uraniireducens).